The chain runs to 232 residues: MSNVDHAEIAKFEALAHRWWDRESEFKPLHEINPLRVNWIDEHISLAGKKVIDIGCGGGILSEAMAQRGAQVTGIDMGEAPLSVARLHLLESGLEIDYRQITAEAMAAEAPEQFDVVTCLEMLEHVPDPASVIRACATLVKPGGQVFFSTINRNPKAYAFAIIGAEYVLQLLPRGTHDFKKFIRPSELGAWSRDAGLAVKDIIGLTYNPLTKHYKLSADVDVNYMVQTVKES.

Positions 36, 55, 76, and 120 each coordinate S-adenosyl-L-methionine.

The protein belongs to the methyltransferase superfamily. UbiG/COQ3 family.

The catalysed reaction is a 3-demethylubiquinol + S-adenosyl-L-methionine = a ubiquinol + S-adenosyl-L-homocysteine + H(+). It catalyses the reaction a 3-(all-trans-polyprenyl)benzene-1,2-diol + S-adenosyl-L-methionine = a 2-methoxy-6-(all-trans-polyprenyl)phenol + S-adenosyl-L-homocysteine + H(+). It participates in cofactor biosynthesis; ubiquinone biosynthesis. O-methyltransferase that catalyzes the 2 O-methylation steps in the ubiquinone biosynthetic pathway. This is Ubiquinone biosynthesis O-methyltransferase from Stutzerimonas stutzeri (strain A1501) (Pseudomonas stutzeri).